The sequence spans 207 residues: Elongation factor 1-beta (207 aa).

An N-acetylalanine modification is found at Ala-2. The segment at Phe-70–Glu-96 is disordered. Acidic residues predominate over residues Glu-80–Glu-96. Ser-90 is modified (phosphoserine; by CK2).

It belongs to the EF-1-beta/EF-1-delta family. As to quaternary structure, EF-1 is composed of 4 subunits: alpha, beta, delta, and gamma. Phosphorylation affects the GDP/GTP exchange rate.

Functionally, EF-1-beta and EF-1-delta stimulate the exchange of GDP bound to EF-1-alpha to GTP. This Artemia salina (Brine shrimp) protein is Elongation factor 1-beta.